A 642-amino-acid polypeptide reads, in one-letter code: tRNA uridine 5-carboxymethylaminomethyl modification enzyme MnmG (642 aa).

Residues Gly10 to Gly15, Val122, and Ser177 each bind FAD. Ser269–Phe283 is an NAD(+) binding site. Residue Gln366 participates in FAD binding.

Belongs to the MnmG family. Homodimer. Heterotetramer of two MnmE and two MnmG subunits. The cofactor is FAD.

The protein localises to the cytoplasm. In terms of biological role, NAD-binding protein involved in the addition of a carboxymethylaminomethyl (cmnm) group at the wobble position (U34) of certain tRNAs, forming tRNA-cmnm(5)s(2)U34. The polypeptide is tRNA uridine 5-carboxymethylaminomethyl modification enzyme MnmG (Syntrophobacter fumaroxidans (strain DSM 10017 / MPOB)).